Consider the following 106-residue polypeptide: uncharacterized protein (106 aa).

Residues 78-98 (LAITGYVVSIPIVLPILIIFI) form a helical membrane-spanning segment.

The protein localises to the membrane. This is an uncharacterized protein from Haemophilus influenzae (strain ATCC 51907 / DSM 11121 / KW20 / Rd).